Reading from the N-terminus, the 457-residue chain is F-box only protein 13 (457 aa).

One can recognise an F-box domain in the interval 64–110 (EFPMDDLNDDVLERVLSWLPTSCFFRMSSVCKRWKSSQTSKSFKLAC).

The sequence is that of F-box only protein 13 (FBX13) from Arabidopsis thaliana (Mouse-ear cress).